We begin with the raw amino-acid sequence, 177 residues long: Large ribosomal subunit protein uL6 (177 aa).

N6-acetyllysine is present on K44.

Belongs to the universal ribosomal protein uL6 family. As to quaternary structure, part of the 50S ribosomal subunit.

This protein binds to the 23S rRNA, and is important in its secondary structure. It is located near the subunit interface in the base of the L7/L12 stalk, and near the tRNA binding site of the peptidyltransferase center. The protein is Large ribosomal subunit protein uL6 of Escherichia fergusonii (strain ATCC 35469 / DSM 13698 / CCUG 18766 / IAM 14443 / JCM 21226 / LMG 7866 / NBRC 102419 / NCTC 12128 / CDC 0568-73).